Here is a 267-residue protein sequence, read N- to C-terminus: Glutamate 5-kinase (267 aa).

Position 14 (Lys14) interacts with ATP. Substrate contacts are provided by Ser54, Asp141, and Asn157. Residues 177–178 (SD) and 219–225 (TGGMLSK) contribute to the ATP site.

The protein belongs to the glutamate 5-kinase family.

The protein localises to the cytoplasm. It catalyses the reaction L-glutamate + ATP = L-glutamyl 5-phosphate + ADP. It participates in amino-acid biosynthesis; L-proline biosynthesis; L-glutamate 5-semialdehyde from L-glutamate: step 1/2. Catalyzes the transfer of a phosphate group to glutamate to form L-glutamate 5-phosphate. This Streptococcus agalactiae serotype Ia (strain ATCC 27591 / A909 / CDC SS700) protein is Glutamate 5-kinase.